The sequence spans 590 residues: Guanylate-binding protein 1 (590 aa).

Residues 1–309 (MASEIHMTGP…NAISSGDLPC (309 aa)) are GTPase domain (Globular). Residues 35–276 (TQPVVVVAIV…FCSYIFSNSK (242 aa)) form the GB1/RHD3-type G domain. GTP contacts are provided by residues 45-52 (GLYRTGKS), 67-69 (LGS), and 97-101 (DTEGL). Ser156 is subject to Phosphoserine. Cys587 is modified (cysteine methyl ester). The S-farnesyl cysteine moiety is linked to residue Cys587. Position 588 is a phosphothreonine (Thr588). Positions 588–590 (TIS) are cleaved as a propeptide — removed in mature form.

Belongs to the TRAFAC class dynamin-like GTPase superfamily. GB1/RHD3 GTPase family. GB1 subfamily. In terms of assembly, homodimer; homodimerization occurs upon GTP-binding and is required for the second hydrolysis step from GDP to GMP. Undergoes conformational changes and oligomerization upon GTP-binding and hydrolysis. Heterodimer with other family members, including GBP2, GBP3, GBP4 and GBP5. Dimerization regulates subcellular location to membranous structures. Interacts with SQSTM1. Interacts (when phosphorylated) with 14-3-3 protein sigma (SFN); leading to GBP1 retention in the cytosol and inactivation. Isoprenylation is required for proper subcellular location. Post-translationally, phosphorylated at Ser-156 by PIM1 in absence of infection, inhibits GBP1: phosphorylation promotes interaction with 14-3-3 protein sigma (SFN), leading to GBP1 retention in the cytosol. Dephosphorylated in response to infection, liberating GBP1.

Its subcellular location is the cytoplasmic vesicle membrane. The protein resides in the golgi apparatus membrane. It localises to the cell membrane. The protein localises to the cytoplasm. It is found in the cytosol. Its subcellular location is the secreted. It carries out the reaction GTP + H2O = GDP + phosphate + H(+). The enzyme catalyses GDP + H2O = GMP + phosphate + H(+). Its function is as follows. Interferon (IFN)-inducible GTPase that plays important roles in innate immunity against a diverse range of bacterial, viral and protozoan pathogens. Hydrolyzes GTP to GMP in two consecutive cleavage reactions: GTP is first hydrolyzed to GDP and then to GMP in a processive manner. Following infection, recruited to the pathogen-containing vacuoles or vacuole-escaped bacteria and promotes both inflammasome assembly and autophagy. Acts as a positive regulator of inflammasome assembly by facilitating the detection of inflammasome ligands from pathogens. Involved in the lysis of pathogen-containing vacuoles, releasing pathogens into the cytosol. Following pathogen release in the cytosol, forms a protein coat in a GTPase-dependent manner that encapsulates pathogens and promotes the detection of ligands by pattern recognition receptors. Plays a key role in inflammasome assembly in response to infection by Gram-negative bacteria: following pathogen release in the cytosol, forms a protein coat that encapsulates Gram-negative bacteria and directly binds to lipopolysaccharide (LPS), disrupting the O-antigen barrier and unmasking lipid A that is that detected by the non-canonical inflammasome effector CASP4/CASP11. Also promotes recruitment of proteins that mediate bacterial cytolysis, leading to release double-stranded DNA (dsDNA) that activates the AIM2 inflammasome. Involved in autophagy by regulating bacteriolytic peptide generation via its interaction with ubiquitin-binding protein SQSTM1, which delivers monoubiquitinated proteins to autolysosomes for the generation of bacteriolytic peptides. Confers protection to several pathogens, including the bacterial pathogens L.monocytogenes and M.bovis BCG as well as the protozoan pathogen T.gondii. Exhibits antiviral activity against influenza virus. The sequence is that of Guanylate-binding protein 1 (GBP1) from Chlorocebus aethiops (Green monkey).